Reading from the N-terminus, the 272-residue chain is 3-methyl-2-oxobutanoate hydroxymethyltransferase (272 aa).

Mg(2+) is bound by residues D51 and D90. Residues 51–52 (DS), D90, and K118 each bind 3-methyl-2-oxobutanoate. E120 lines the Mg(2+) pocket. E187 serves as the catalytic Proton acceptor.

This sequence belongs to the PanB family. As to quaternary structure, homodecamer; pentamer of dimers. It depends on Mg(2+) as a cofactor.

It is found in the cytoplasm. The enzyme catalyses 3-methyl-2-oxobutanoate + (6R)-5,10-methylene-5,6,7,8-tetrahydrofolate + H2O = 2-dehydropantoate + (6S)-5,6,7,8-tetrahydrofolate. Its pathway is cofactor biosynthesis; (R)-pantothenate biosynthesis; (R)-pantoate from 3-methyl-2-oxobutanoate: step 1/2. In terms of biological role, catalyzes the reversible reaction in which hydroxymethyl group from 5,10-methylenetetrahydrofolate is transferred onto alpha-ketoisovalerate to form ketopantoate. The protein is 3-methyl-2-oxobutanoate hydroxymethyltransferase of Xylella fastidiosa (strain M12).